We begin with the raw amino-acid sequence, 341 residues long: Anthranilate phosphoribosyltransferase (341 aa).

5-phospho-alpha-D-ribose 1-diphosphate-binding positions include glycine 79, 82 to 83, threonine 87, 89 to 92, 107 to 115, and serine 119; these read GD, NIST, and KHGNRAVSS. Residue glycine 79 coordinates anthranilate. Serine 91 contributes to the Mg(2+) binding site. Residue asparagine 110 coordinates anthranilate. Arginine 165 lines the anthranilate pocket. The Mg(2+) site is built by aspartate 224 and glutamate 225.

The protein belongs to the anthranilate phosphoribosyltransferase family. Homodimer. It depends on Mg(2+) as a cofactor.

It catalyses the reaction N-(5-phospho-beta-D-ribosyl)anthranilate + diphosphate = 5-phospho-alpha-D-ribose 1-diphosphate + anthranilate. The protein operates within amino-acid biosynthesis; L-tryptophan biosynthesis; L-tryptophan from chorismate: step 2/5. Its function is as follows. Catalyzes the transfer of the phosphoribosyl group of 5-phosphorylribose-1-pyrophosphate (PRPP) to anthranilate to yield N-(5'-phosphoribosyl)-anthranilate (PRA). The protein is Anthranilate phosphoribosyltransferase of Bacillus cereus (strain ZK / E33L).